The following is a 161-amino-acid chain: 3-isopropylmalate dehydratase small subunit (161 aa).

This sequence belongs to the LeuD family. LeuD type 2 subfamily. As to quaternary structure, heterodimer of LeuC and LeuD.

The enzyme catalyses (2R,3S)-3-isopropylmalate = (2S)-2-isopropylmalate. The protein operates within amino-acid biosynthesis; L-leucine biosynthesis; L-leucine from 3-methyl-2-oxobutanoate: step 2/4. In terms of biological role, catalyzes the isomerization between 2-isopropylmalate and 3-isopropylmalate, via the formation of 2-isopropylmaleate. The chain is 3-isopropylmalate dehydratase small subunit from Pyrobaculum islandicum (strain DSM 4184 / JCM 9189 / GEO3).